The chain runs to 386 residues: Succinate--CoA ligase [ADP-forming] subunit beta (386 aa).

Residues 9 to 244 enclose the ATP-grasp domain; it reads KQILKRFGIS…YDEEIPEEIE (236 aa). ATP contacts are provided by residues Lys46, 53-55, Glu99, Cys102, and Glu107; that span reads GRG. Mg(2+) is bound by residues Asn199 and Asp213. Substrate contacts are provided by residues Asn264 and 320–322; that span reads GIM.

Belongs to the succinate/malate CoA ligase beta subunit family. In terms of assembly, heterotetramer of two alpha and two beta subunits. Mg(2+) serves as cofactor.

It catalyses the reaction succinate + ATP + CoA = succinyl-CoA + ADP + phosphate. The catalysed reaction is GTP + succinate + CoA = succinyl-CoA + GDP + phosphate. The protein operates within carbohydrate metabolism; tricarboxylic acid cycle; succinate from succinyl-CoA (ligase route): step 1/1. Functionally, succinyl-CoA synthetase functions in the citric acid cycle (TCA), coupling the hydrolysis of succinyl-CoA to the synthesis of either ATP or GTP and thus represents the only step of substrate-level phosphorylation in the TCA. The beta subunit provides nucleotide specificity of the enzyme and binds the substrate succinate, while the binding sites for coenzyme A and phosphate are found in the alpha subunit. The protein is Succinate--CoA ligase [ADP-forming] subunit beta of Ehrlichia ruminantium (strain Welgevonden).